We begin with the raw amino-acid sequence, 376 residues long: Multiphosphoryl transfer protein (376 aa).

Positions 2 to 142 (FQLSVQDIHP…EELRALLMGE (141 aa)) constitute a PTS EIIA type-2 domain. The active-site Tele-phosphohistidine intermediate; for EIIA activity is His62. Position 62 is a phosphohistidine; by HPr (His62). The m domain stretch occupies residues 156–284 (TLDVIASSLV…LTSDDALTDD (129 aa)). In terms of domain architecture, HPr spans 285–375 (VLSAEFVVRN…DAIAAGLGEG (91 aa)). His299 acts as the Pros-phosphohistidine intermediate; for HPr activity in catalysis. A Phosphohistidine; by EI modification is found at His299.

Its subcellular location is the cytoplasm. The phosphoenolpyruvate-dependent sugar phosphotransferase system (sugar PTS), a major carbohydrate active transport system, catalyzes the phosphorylation of incoming sugar substrates concomitantly with their translocation across the cell membrane. The enzyme II FruAB PTS system is involved in fructose transport. In Salmonella typhimurium (strain LT2 / SGSC1412 / ATCC 700720), this protein is Multiphosphoryl transfer protein (fruB).